A 512-amino-acid polypeptide reads, in one-letter code: MGLSLMLQGTASDVGKSVLVAGLCRIFVQDGYRCAPFKSQNMALNSGITINGEEMGRAQIFQAEAAGIEPDVRMNPVLLKPTSERKAQVVLMGKVACSMNAVEYHQYKPSLQQQICEVFHSLASEYDVIVLEGAGSPAEINLRDRDIVNMGMAEMVDAPVLLVADIDRGGVFAAIYGTLALLRPAEKARVKGVIINKFRGDISLLQPGIEQIEALTGVPVLGVMPWLDIDLEDEDGVALQTGKYDGATEKALDITVIRLPHIANFTDFNALAVQPDVRLRYVTQPSALQPSDLIILPGSKNTLGDLQWLRQNGLADALLTAHQAGVPVIGICGGYQMLGKRIIDGVESGIEQMDGLGLLDMETRFAHEKVTTRVNGNCLLALPGLLSECVEQPIRGYEIHMGSSLLGADATPFIDITERNGQSGGWCDGAVNREGSVMGSYIHGLFDSANFTRALLNALRQRKGLAAYQGEILDYTHYKQTQFDLLAKAMREHLDIERIYQCMKTHRQGSVP.

A GATase cobBQ-type domain is found at 251-451; that stretch reads ALDITVIRLP…IHGLFDSANF (201 aa). Cys332 acts as the Nucleophile in catalysis. His443 is an active-site residue.

This sequence belongs to the CobB/CobQ family. CobQ subfamily.

It functions in the pathway cofactor biosynthesis; adenosylcobalamin biosynthesis. Functionally, catalyzes amidations at positions B, D, E, and G on adenosylcobyrinic A,C-diamide. NH(2) groups are provided by glutamine, and one molecule of ATP is hydrogenolyzed for each amidation. This is Cobyric acid synthase from Photorhabdus laumondii subsp. laumondii (strain DSM 15139 / CIP 105565 / TT01) (Photorhabdus luminescens subsp. laumondii).